We begin with the raw amino-acid sequence, 247 residues long: MSVDLSSATEGDLRELAARGAASLEGASARELLQWTEETFGSGASEGTGYRNSFIVASNMQDGVLVHLAAQVHPGVDVLFLDTGYHFAETIGTRDAVEQVYGVNVINARAEASVAEQDAAEGKDLFAREPNRCCALRKVAPLKKTLAGYKAWVTGIRRVEAPTRANAPLISFDDAFGLVKINPIAAWSDEDMQSYIDEHSILVNPLVDEGYPSIGCAPCTSKPAPGSDPRSGRWAGQAKTECGLHAS.

[4Fe-4S] cluster contacts are provided by Cys-133, Cys-134, Cys-216, and Cys-219. Positions 222–247 (KPAPGSDPRSGRWAGQAKTECGLHAS) are disordered. The Nucleophile; cysteine thiosulfonate intermediate role is filled by Cys-242.

This sequence belongs to the PAPS reductase family. CysH subfamily. The cofactor is [4Fe-4S] cluster.

The protein resides in the cytoplasm. It carries out the reaction [thioredoxin]-disulfide + sulfite + AMP + 2 H(+) = adenosine 5'-phosphosulfate + [thioredoxin]-dithiol. Its pathway is sulfur metabolism; hydrogen sulfide biosynthesis; sulfite from sulfate. Catalyzes the formation of sulfite from adenosine 5'-phosphosulfate (APS) using thioredoxin as an electron donor. In Rhodococcus opacus (strain B4), this protein is Adenosine 5'-phosphosulfate reductase.